We begin with the raw amino-acid sequence, 258 residues long: MAKRLDLKDVNIYYGAFHAVADVSLAVQPRSVTAFIGPSGCGKSTVLRTLNRMHEVIPGARVEGSVLLDGEDIYGPGVDPVGVRKTIGMVFQRPNPFPTMSIRDNVVAGLKLQGVRNKKTLDEVAERSLRGANLWNEVKDRLDKPGGGLSGGQQQRLCIARAIAVQPDVLLMDEPCSALDPISTLAIEDLIATLKLDYTIVIVTHNMQQAARVSDQTAFFNLEATGKPGRLIEIDDTEKIFSNPRQKATEDYISGRFG.

The region spanning 5–247 (LDLKDVNIYY…EKIFSNPRQK (243 aa)) is the ABC transporter domain. 37-44 (GPSGCGKS) is a binding site for ATP.

Belongs to the ABC transporter superfamily. Phosphate importer (TC 3.A.1.7) family. The complex is composed of two ATP-binding proteins (PstB), two transmembrane proteins (PstC and PstA) and a solute-binding protein (PstS).

The protein localises to the cell membrane. The catalysed reaction is phosphate(out) + ATP + H2O = ADP + 2 phosphate(in) + H(+). Its function is as follows. Part of the ABC transporter complex PstSACB involved in phosphate import. Responsible for energy coupling to the transport system. The chain is Phosphate import ATP-binding protein PstB from Mycolicibacterium smegmatis (Mycobacterium smegmatis).